The primary structure comprises 231 residues: MIP18 family protein YHR122W (231 aa).

Disordered regions lie at residues 1–26 and 75–100; these read MSEF…DSTK and LTSD…EEEE. The residue at position 2 (Ser2) is an N-acetylserine. The span at 76-90 shows a compositional bias: acidic residues; that stretch reads TSDEDSLPAESEDES.

This sequence belongs to the MIP18 family.

In terms of biological role, may play a role in chromosome segregation through establishment of sister chromatid cohesion. The polypeptide is MIP18 family protein YHR122W (Saccharomyces cerevisiae (strain ATCC 204508 / S288c) (Baker's yeast)).